The following is a 219-amino-acid chain: Agamous-like MADS-box protein AGL19 (219 aa).

An MADS-box domain is found at 1 to 61 (MVRGKTEMKR…SKLYEFSSSS (61 aa)). Residues 77–96 (GNNHKRNDNSQQARDETSGL) form a disordered region. The K-box domain maps to 86 to 176 (SQQARDETSG…KEKWLGMGTA (91 aa)).

In terms of assembly, interacts with SOC1 and AGL21. As to expression, mostly expressed in the outer layers of the root meristem (lateral root cap and epidermis) and in the central cylinder cells of mature roots. Also present in rosette leaves and seedlings and, to a lesser extent, in cauline leaves and flowers. Enriched in apices including the shoot apical meristem and developing leaf primordia.

The protein resides in the nucleus. Functionally, probable transcription factor that promotes flowering, especially in response to vernalization by short periods of cold, in an FLC-inpedendent manner. The polypeptide is Agamous-like MADS-box protein AGL19 (AGL19) (Arabidopsis thaliana (Mouse-ear cress)).